A 264-amino-acid polypeptide reads, in one-letter code: DNA repair protein RecO (264 aa).

It belongs to the RecO family.

Its function is as follows. Involved in DNA repair and RecF pathway recombination. This Leuconostoc citreum (strain KM20) protein is DNA repair protein RecO.